Consider the following 177-residue polypeptide: Anti-apoptotic protein NR13 (177 aa).

The short motif at 75–94 (LEAEGGLNWGRLLALVVFTG) is the BH1 element. The chain crosses the membrane as a helical span at residues 86 to 106 (LLALVVFTGTLAAALAESGCE). The short motif at 126–141 (EWLEEHGGWDGFCRFF) is the BH2 element. A helical membrane pass occupies residues 156 to 176 (SNAIMAAAGFGIAGLAFLLVV).

Belongs to the Bcl-2 family. As to quaternary structure, interacts with BAX. Expressed preferentially in heart, skeletal muscle, retina, optical tectum and bursa of Fabricius.

It localises to the cell membrane. Functionally, shows anti-apoptotic properties. Counteract the pro-apoptotic activity of BAX. The protein is Anti-apoptotic protein NR13 (NR13) of Gallus gallus (Chicken).